Consider the following 495-residue polypeptide: Germacrene A acid 8-beta-hydroxylase (495 aa).

A helical; Signal-anchor for type II membrane protein transmembrane segment spans residues Pro3–Val23. Asn103 carries an N-linked (GlcNAc...) asparagine glycan. Heme is bound at residue Cys433.

It belongs to the cytochrome P450 family. Heme serves as cofactor. Mostly expressed in leaves and flowers, and, to a lower extent, in roots and stems.

It is found in the membrane. It carries out the reaction germacra-1(10),4,11(13)-trien-12-oate + reduced [NADPH--hemoprotein reductase] + O2 = 8beta-hydroxygermacra-1(10),4,11(13)-trien-12-oate + oxidized [NADPH--hemoprotein reductase] + H2O + H(+). The enzyme catalyses germacra-1(10),4,11(13)-trien-12-oate + reduced [NADPH--hemoprotein reductase] + O2 = 8-epi-inunolide + oxidized [NADPH--hemoprotein reductase] + 2 H2O. It catalyses the reaction germacra-1(10),4,11(13)-trien-12-oate + reduced [NADPH--hemoprotein reductase] + O2 = 8alpha-hydroxygermacra-1(10),4,11(13)-trien-12-oate + oxidized [NADPH--hemoprotein reductase] + H2O + H(+). Its pathway is secondary metabolite biosynthesis; terpenoid biosynthesis. Its function is as follows. Involved in the biosynthesis of germacrene-derived sesquiterpene lactones. Hydroxylates germacrene A acid to 8-beta-hydroxy-germacrene A and 8-alpha-hydroxy-germacrene A acids. Unlike 8-alpha-hydroxy-germacrene A acid with is spontaneously converted into inunolide (12, 8-alpha), 8-beta-hydroxy-germacrene A cannot undergo spontaneous lactonization. The sequence is that of Germacrene A acid 8-beta-hydroxylase from Inula hupehensis (Inula helianthus-aquatilis subsp. hupehensis).